A 346-amino-acid polypeptide reads, in one-letter code: 3-isopropylmalate dehydrogenase (346 aa).

An NAD(+)-binding site is contributed by 76 to 87 (GPQWTDPNNRPE). Arginine 94, arginine 104, arginine 132, and aspartate 217 together coordinate substrate. Aspartate 217, aspartate 241, and aspartate 245 together coordinate Mg(2+). 275-287 (GSAPDIANQNLAN) contributes to the NAD(+) binding site.

The protein belongs to the isocitrate and isopropylmalate dehydrogenases family. LeuB type 1 subfamily. In terms of assembly, homodimer. Mg(2+) serves as cofactor. Requires Mn(2+) as cofactor.

It localises to the cytoplasm. It catalyses the reaction (2R,3S)-3-isopropylmalate + NAD(+) = 4-methyl-2-oxopentanoate + CO2 + NADH. The protein operates within amino-acid biosynthesis; L-leucine biosynthesis; L-leucine from 3-methyl-2-oxobutanoate: step 3/4. Catalyzes the oxidation of 3-carboxy-2-hydroxy-4-methylpentanoate (3-isopropylmalate) to 3-carboxy-4-methyl-2-oxopentanoate. The product decarboxylates to 4-methyl-2 oxopentanoate. The chain is 3-isopropylmalate dehydrogenase from Staphylococcus haemolyticus (strain JCSC1435).